The sequence spans 449 residues: Hyaluronidase-2 (449 aa).

An N-terminal signal peptide occupies residues 1–23 (MYHLWIKCLAAWIFLKRCNGVHA). Cystine bridges form between Cys-47–Cys-340 and Cys-211–Cys-227. N-linked (GlcNAc...) asparagine glycosylation is found at Asn-67, Asn-103, and Asn-111. Glu-135 acts as the Proton donor in catalysis. Asn-153 carries N-linked (GlcNAc...) asparagine glycosylation. Asn-357 carries an N-linked (GlcNAc...) asparagine glycan. Disulfide bonds link Cys-365–Cys-376, Cys-370–Cys-427, and Cys-429–Cys-438. A glycan (N-linked (GlcNAc...) asparagine) is linked at Asn-401. The region spanning 427–438 (CQCYQGWKGLYC) is the EGF-like domain.

This sequence belongs to the glycosyl hydrolase 56 family. In terms of assembly, monomer. As to expression, expressed by the venom gland.

It is found in the secreted. It catalyses the reaction Random hydrolysis of (1-&gt;4)-linkages between N-acetyl-beta-D-glucosamine and D-glucuronate residues in hyaluronate.. Snake venom endo-hyaluronidase that degrades hyaluronan to smaller oligosaccharide fragments. In venom, it is not toxic by itself, but increases the diffusion of other venom proteins by degrading the extracellular matrix. In addition, it displays antiedematogenic activity. This is Hyaluronidase-2 from Bitis arietans (African puff adder).